We begin with the raw amino-acid sequence, 269 residues long: Glucosyl-3-phosphoglycerate/mannosyl-3-phosphoglycerate phosphatase (269 aa).

Catalysis depends on aspartate 6, which acts as the Nucleophile. Mg(2+) contacts are provided by aspartate 6, aspartate 8, and aspartate 210.

It belongs to the HAD-like hydrolase superfamily. MPGP family. Monomer. Co(2+) is required as a cofactor. Mg(2+) serves as cofactor.

The catalysed reaction is (2R)-2-O-(alpha-D-glucopyranosyl)-3-phospho-glycerate + H2O = (2R)-2-O-(alpha-D-glucopyranosyl)-glycerate + phosphate. It carries out the reaction 2-O-(alpha-D-mannosyl)-3-phosphoglycerate + H2O = (2R)-2-O-(alpha-D-mannosyl)-glycerate + phosphate. Its function is as follows. Involved in the biosynthesis of glucosylglycerate. Catalyzes the dephosphorylation of glucosyl-3-phosphoglycerate (GPG) and mannosyl-3-phosphoglycerate (MPG) to glucosylglycerate (GG) and mannosylglycerate (MG), respectively. This chain is Glucosyl-3-phosphoglycerate/mannosyl-3-phosphoglycerate phosphatase, found in Persephonella marina (strain DSM 14350 / EX-H1).